The primary structure comprises 150 residues: Cytochrome c oxidase subunit 5A, mitochondrial (150 aa).

A mitochondrion-targeting transit peptide spans Met1–Tyr41. Residues Leu2 to Ala17 carry the SIFI-degron motif. Lys87 and Lys113 each carry N6-acetyllysine. Thr141 is modified (phosphothreonine).

It belongs to the cytochrome c oxidase subunit 5A family. In terms of assembly, component of the cytochrome c oxidase (complex IV, CIV), a multisubunit enzyme composed of 14 subunits. The complex is composed of a catalytic core of 3 subunits MT-CO1, MT-CO2 and MT-CO3, encoded in the mitochondrial DNA, and 11 supernumerary subunits COX4I1 (or COX4I2), COX5A, COX5B, COX6A1 (or COX6A2), COX6B1 (or COX6B2), COX6C, COX7A2 (or COX7A1), COX7B, COX7C, COX8A and NDUFA4, which are encoded in the nuclear genome. The complex exists as a monomer or a dimer and forms supercomplexes (SCs) in the inner mitochondrial membrane with NADH-ubiquinone oxidoreductase (complex I, CI) and ubiquinol-cytochrome c oxidoreductase (cytochrome b-c1 complex, complex III, CIII), resulting in different assemblies (supercomplex SCI(1)III(2)IV(1) and megacomplex MCI(2)III(2)IV(2)). Interacts with AFG1L. Interacts with RAB5IF. In terms of processing, in response to mitochondrial stress, the precursor protein is ubiquitinated by the SIFI complex in the cytoplasm before mitochondrial import, leading to its degradation. Within the SIFI complex, UBR4 initiates ubiquitin chain that are further elongated or branched by KCMF1.

The protein localises to the mitochondrion inner membrane. The protein operates within energy metabolism; oxidative phosphorylation. Component of the cytochrome c oxidase, the last enzyme in the mitochondrial electron transport chain which drives oxidative phosphorylation. The respiratory chain contains 3 multisubunit complexes succinate dehydrogenase (complex II, CII), ubiquinol-cytochrome c oxidoreductase (cytochrome b-c1 complex, complex III, CIII) and cytochrome c oxidase (complex IV, CIV), that cooperate to transfer electrons derived from NADH and succinate to molecular oxygen, creating an electrochemical gradient over the inner membrane that drives transmembrane transport and the ATP synthase. Cytochrome c oxidase is the component of the respiratory chain that catalyzes the reduction of oxygen to water. Electrons originating from reduced cytochrome c in the intermembrane space (IMS) are transferred via the dinuclear copper A center (CU(A)) of subunit 2 and heme A of subunit 1 to the active site in subunit 1, a binuclear center (BNC) formed by heme A3 and copper B (CU(B)). The BNC reduces molecular oxygen to 2 water molecules using 4 electrons from cytochrome c in the IMS and 4 protons from the mitochondrial matrix. This chain is Cytochrome c oxidase subunit 5A, mitochondrial (COX5A), found in Homo sapiens (Human).